A 131-amino-acid chain; its full sequence is MNLPSTKVSWAAVTLLLLLLLLPPALLSSGAAAQPLPDCCRQKTCSCRLYELLHGAGNHAAGILTLGKRRSGPPGLQGRLQRLLQASGNHAAGILTMGRRAGAEPAPRPCLGRRCSAPAAASVAPGGQSGI.

The signal sequence occupies residues 1 to 33; the sequence is MNLPSTKVSWAAVTLLLLLLLLPPALLSSGAAA. Gln-34 carries the post-translational modification Pyrrolidone carboxylic acid. 2 disulfides stabilise this stretch: Cys-39-Cys-45 and Cys-40-Cys-47. Leu-66 is modified (leucine amide). Residue Met-97 is modified to Methionine amide. Residues 98–131 constitute a propeptide, removed in mature form; sequence GRRAGAEPAPRPCLGRRCSAPAAASVAPGGQSGI.

It belongs to the orexin family. In terms of processing, specific enzymatic cleavages at paired basic residues yield the different active peptides. Abundantly expressed in subthalamic nucleus but undetectable in other brain regions tested (hypothalamus was not tested) and in heart, placenta, lung, liver, skeletal muscle, kidney and pancreas.

It localises to the rough endoplasmic reticulum. Its subcellular location is the cytoplasmic vesicle. The protein resides in the synapse. Neuropeptides that play a significant role in the regulation of food intake and sleep-wakefulness, possibly by coordinating the complex behavioral and physiologic responses of these complementary homeostatic functions. A broader role in the homeostatic regulation of energy metabolism, autonomic function, hormonal balance and the regulation of body fluids, is also suggested. Functionally, binds to orexin receptors HCRTR1/OX1R and HCRTR2/OX2R with a high affinity. Stimulates food intake. Modulates pituitary luteinizing hormone secretion in an ovarian steroid-dependent manner. In terms of biological role, binds to orexin receptor HCRTR2/OX2R only. Stimulates food intake. Modulates pituitary luteinizing hormone secretion in an ovarian steroid-dependent manner. In Homo sapiens (Human), this protein is Hypocretin neuropeptide precursor.